A 406-amino-acid polypeptide reads, in one-letter code: Imidazolonepropionase (406 aa).

His-72 and His-74 together coordinate Fe(3+). Residues His-72 and His-74 each coordinate Zn(2+). Arg-81, Tyr-144, and His-177 together coordinate 4-imidazolone-5-propanoate. N-formimidoyl-L-glutamate is bound at residue Tyr-144. A Fe(3+)-binding site is contributed by His-242. His-242 is a binding site for Zn(2+). Residue Gln-245 coordinates 4-imidazolone-5-propanoate. Asp-317 is a Fe(3+) binding site. Zn(2+) is bound at residue Asp-317. N-formimidoyl-L-glutamate-binding residues include Asn-319 and Gly-321. Thr-322 serves as a coordination point for 4-imidazolone-5-propanoate.

Belongs to the metallo-dependent hydrolases superfamily. HutI family. It depends on Zn(2+) as a cofactor. Requires Fe(3+) as cofactor.

The protein localises to the cytoplasm. The enzyme catalyses 4-imidazolone-5-propanoate + H2O = N-formimidoyl-L-glutamate. Its pathway is amino-acid degradation; L-histidine degradation into L-glutamate; N-formimidoyl-L-glutamate from L-histidine: step 3/3. Its function is as follows. Catalyzes the hydrolytic cleavage of the carbon-nitrogen bond in imidazolone-5-propanoate to yield N-formimidoyl-L-glutamate. It is the third step in the universal histidine degradation pathway. The polypeptide is Imidazolonepropionase (Yersinia pseudotuberculosis serotype O:3 (strain YPIII)).